The primary structure comprises 365 residues: MNQIINDNYREFLKKLRERHLKKRKVKDKNKPIAVWMQDDIYRDFSIGKSLTIILRTEGCYYAKEGGCLMCSYLMDSSPEKITAENIINQFNYAIEKYKEKIKDLKDFSVKIFTSGSFLDDREVPKEARNYIFKKLSEFDNLKEVAIESRPEFIDEDKLNEIRKYLDVNVEIGVGIESFNEEIREKAINKGITNEQIIRAIELAKNYNIGIKAYLLIKPLFITEKEAIYDSISSANKCIELGCSRISFCPATVHKGSVMEFFFNKNQYRPPFLWSIIEILKEVKKSNPKALIMCDTSGVGSERGAHNLYNCKCNKLIKERLERFTLTQDINVLNVECECKNIWNAYIEVENKNIVPLGDERKLLL.

The 245-residue stretch at 45–289 folds into the Radical SAM core domain; that stretch reads FSIGKSLTII…LKEVKKSNPK (245 aa). C60, C68, and C71 together coordinate [4Fe-4S] cluster.

[4Fe-4S] cluster serves as cofactor.

This is an uncharacterized protein from Methanocaldococcus jannaschii (strain ATCC 43067 / DSM 2661 / JAL-1 / JCM 10045 / NBRC 100440) (Methanococcus jannaschii).